Consider the following 204-residue polypeptide: MAANGAKGRKVMRVLVVDNYDSFTYNLVQYLGELGAEPIVWRNDRFRLEEVEALDPDRILISPGPCTPFEAGLSVPLVQRYAPRYPILGVCLGHQAIGAAFGGKVVPAPVLMHGKVSPIHHDGTGVFRGLDSPFPATRYHSLAVVEVPEALVVNAWAEEAGGRTVMGFRHRDYPTHGVQFHPESYLTEAGKLILKNFLEDPWTR.

Residues 13-204 (RVLVVDNYDS…KNFLEDPWTR (192 aa)) enclose the Glutamine amidotransferase type-1 domain. Residue 64–66 (GPC) participates in L-glutamine binding. Cys91 functions as the Nucleophile; for GATase activity in the catalytic mechanism. L-glutamine contacts are provided by residues Gln95 and 141-142 (SL). Residues His181 and Glu183 each act as for GATase activity in the active site.

As to quaternary structure, heterotetramer consisting of two non-identical subunits: a beta subunit (TrpG) and a large alpha subunit (TrpE).

It catalyses the reaction chorismate + L-glutamine = anthranilate + pyruvate + L-glutamate + H(+). The protein operates within amino-acid biosynthesis; L-tryptophan biosynthesis; L-tryptophan from chorismate: step 1/5. Part of a heterotetrameric complex that catalyzes the two-step biosynthesis of anthranilate, an intermediate in the biosynthesis of L-tryptophan. In the first step, the glutamine-binding beta subunit (TrpG) of anthranilate synthase (AS) provides the glutamine amidotransferase activity which generates ammonia as a substrate that, along with chorismate, is used in the second step, catalyzed by the large alpha subunit of AS (TrpE) to produce anthranilate. In the absence of TrpG, TrpE can synthesize anthranilate directly from chorismate and high concentrations of ammonia. The protein is Anthranilate synthase component 2 (trpG) of Thermus thermophilus (strain ATCC 27634 / DSM 579 / HB8).